Reading from the N-terminus, the 242-residue chain is MQDPNEDTEWNEILRDFGILPPKEEPKDEIEEMVLRLQKEAMVKPYEKMTLAELKEAEDEFDDEDMKAIEIYREKRLQEWKALKKKQKFGELREISGNQYVNEVTNAEKDVWVIIHLYRSSIPLCLLVNQHLSLLARKFPETKFVKAIANSCIEHYHDNCLPTIFVYKNGQIEGKFIGIIECGGINLKLEELEWKLAEVGAIQTDLEENPKKAIVDVMVSSIRNTSIYGDSDSSNSDSEDTK.

In terms of domain architecture, Phosducin spans 34–201 (VLRLQKEAMV…LEWKLAEVGA (168 aa)). The tract at residues 89–242 (FGELREISGN…SSNSDSEDTK (154 aa)) is thioredoxin fold.

This sequence belongs to the phosducin family. As to quaternary structure, interacts with the CCT chaperonin complex and actin.

Its subcellular location is the endoplasmic reticulum. Essential for male fertility, spermiogenesis and acrosome formation. This Bos taurus (Bovine) protein is Phosducin-like protein 2 (PDCL2).